A 118-amino-acid polypeptide reads, in one-letter code: Hisactophilin-2 (118 aa).

G2 carries N-myristoyl glycine lipidation. Residues 8–109 are contains several HHXH repeats; it reads AHNGHYLSAE…HVSTSHHHDH (102 aa). 2 tandem repeats follow at residues 34–46 and 74–86. Residues 34-86 form a 2 X 13 AA approximate repeats region; the sequence is FHIENHGSKVALRTHCGKYVSIGDHKQVYLSHHLHGDHSLFHLEHHHGKVSIK. The disordered stretch occupies residues 99-118; that stretch reads GHVSTSHHHDHHATFEEHIL.

The protein belongs to the hisactophilin family. In terms of assembly, homodimer or heterodimer of hatA and hatB, linked by a disulfide bond. Phosphorylated.

The protein resides in the cytoplasm. Its subcellular location is the cell membrane. May act as an intracellular pH sensor that links chemotactic signals to responses in the microfilament system of the cells by nucleating actin polymerization or stabilizing the filaments. This Dictyostelium discoideum (Social amoeba) protein is Hisactophilin-2 (hatB).